The following is a 102-amino-acid chain: Putative protein p7 (102 aa).

The protein is Putative protein p7 (7) of Escherichia coli (Bacteriophage APSE-1).